The following is a 341-amino-acid chain: S-adenosylmethionine:tRNA ribosyltransferase-isomerase (341 aa).

Belongs to the QueA family. Monomer.

It is found in the cytoplasm. The catalysed reaction is 7-aminomethyl-7-carbaguanosine(34) in tRNA + S-adenosyl-L-methionine = epoxyqueuosine(34) in tRNA + adenine + L-methionine + 2 H(+). It participates in tRNA modification; tRNA-queuosine biosynthesis. Its function is as follows. Transfers and isomerizes the ribose moiety from AdoMet to the 7-aminomethyl group of 7-deazaguanine (preQ1-tRNA) to give epoxyqueuosine (oQ-tRNA). The polypeptide is S-adenosylmethionine:tRNA ribosyltransferase-isomerase (Acetivibrio thermocellus (strain ATCC 27405 / DSM 1237 / JCM 9322 / NBRC 103400 / NCIMB 10682 / NRRL B-4536 / VPI 7372) (Clostridium thermocellum)).